Consider the following 270-residue polypeptide: Elongation factor Tu (270 aa).

Positions 1 to 103 (GILVVSAADG…AVDDYIPTPE (103 aa)) constitute a tr-type G domain. GTP is bound at residue 35 to 38 (NKVD).

It belongs to the TRAFAC class translation factor GTPase superfamily. Classic translation factor GTPase family. EF-Tu/EF-1A subfamily. As to quaternary structure, monomer.

It is found in the cytoplasm. It catalyses the reaction GTP + H2O = GDP + phosphate + H(+). Functionally, GTP hydrolase that promotes the GTP-dependent binding of aminoacyl-tRNA to the A-site of ribosomes during protein biosynthesis. This is Elongation factor Tu (tuf) from Staphylococcus warneri.